Consider the following 408-residue polypeptide: NADH-quinone oxidoreductase subunit D (408 aa).

The protein belongs to the complex I 49 kDa subunit family. In terms of assembly, NDH-1 is composed of 14 different subunits. Subunits NuoB, C, D, E, F, and G constitute the peripheral sector of the complex.

The protein localises to the cell inner membrane. It carries out the reaction a quinone + NADH + 5 H(+)(in) = a quinol + NAD(+) + 4 H(+)(out). Its function is as follows. NDH-1 shuttles electrons from NADH, via FMN and iron-sulfur (Fe-S) centers, to quinones in the respiratory chain. The immediate electron acceptor for the enzyme in this species is believed to be ubiquinone. Couples the redox reaction to proton translocation (for every two electrons transferred, four hydrogen ions are translocated across the cytoplasmic membrane), and thus conserves the redox energy in a proton gradient. The sequence is that of NADH-quinone oxidoreductase subunit D from Wolinella succinogenes (strain ATCC 29543 / DSM 1740 / CCUG 13145 / JCM 31913 / LMG 7466 / NCTC 11488 / FDC 602W) (Vibrio succinogenes).